Here is a 35-residue protein sequence, read N- to C-terminus: Photosystem II reaction center protein T (35 aa).

Residues 3–23 (ALVYTFLLVSTLGIIFFAIFF) form a helical membrane-spanning segment.

This sequence belongs to the PsbT family. As to quaternary structure, PSII is composed of 1 copy each of membrane proteins PsbA, PsbB, PsbC, PsbD, PsbE, PsbF, PsbH, PsbI, PsbJ, PsbK, PsbL, PsbM, PsbT, PsbY, PsbZ, Psb30/Ycf12, at least 3 peripheral proteins of the oxygen-evolving complex and a large number of cofactors. It forms dimeric complexes.

It localises to the plastid. The protein resides in the chloroplast thylakoid membrane. In terms of biological role, found at the monomer-monomer interface of the photosystem II (PS II) dimer, plays a role in assembly and dimerization of PSII. PSII is a light-driven water plastoquinone oxidoreductase, using light energy to abstract electrons from H(2)O, generating a proton gradient subsequently used for ATP formation. This Suaeda aralocaspica (Seablite) protein is Photosystem II reaction center protein T.